Here is a 210-residue protein sequence, read N- to C-terminus: Peptidyl-tRNA hydrolase (210 aa).

Residue Y14 participates in tRNA binding. Catalysis depends on H19, which acts as the Proton acceptor. Positions 64, 66, and 112 each coordinate tRNA.

The protein belongs to the PTH family. In terms of assembly, monomer.

The protein resides in the cytoplasm. The catalysed reaction is an N-acyl-L-alpha-aminoacyl-tRNA + H2O = an N-acyl-L-amino acid + a tRNA + H(+). Functionally, hydrolyzes ribosome-free peptidyl-tRNAs (with 1 or more amino acids incorporated), which drop off the ribosome during protein synthesis, or as a result of ribosome stalling. Its function is as follows. Catalyzes the release of premature peptidyl moieties from peptidyl-tRNA molecules trapped in stalled 50S ribosomal subunits, and thus maintains levels of free tRNAs and 50S ribosomes. This chain is Peptidyl-tRNA hydrolase, found in Methylorubrum populi (strain ATCC BAA-705 / NCIMB 13946 / BJ001) (Methylobacterium populi).